Here is a 169-residue protein sequence, read N- to C-terminus: Crossover junction endodeoxyribonuclease RuvC (169 aa).

Catalysis depends on residues D11, E71, and D143. Residues D11, E71, and D143 each coordinate Mg(2+).

The protein belongs to the RuvC family. As to quaternary structure, homodimer which binds Holliday junction (HJ) DNA. The HJ becomes 2-fold symmetrical on binding to RuvC with unstacked arms; it has a different conformation from HJ DNA in complex with RuvA. In the full resolvosome a probable DNA-RuvA(4)-RuvB(12)-RuvC(2) complex forms which resolves the HJ. Mg(2+) serves as cofactor.

The protein localises to the cytoplasm. It catalyses the reaction Endonucleolytic cleavage at a junction such as a reciprocal single-stranded crossover between two homologous DNA duplexes (Holliday junction).. Functionally, the RuvA-RuvB-RuvC complex processes Holliday junction (HJ) DNA during genetic recombination and DNA repair. Endonuclease that resolves HJ intermediates. Cleaves cruciform DNA by making single-stranded nicks across the HJ at symmetrical positions within the homologous arms, yielding a 5'-phosphate and a 3'-hydroxyl group; requires a central core of homology in the junction. The consensus cleavage sequence is 5'-(A/T)TT(C/G)-3'. Cleavage occurs on the 3'-side of the TT dinucleotide at the point of strand exchange. HJ branch migration catalyzed by RuvA-RuvB allows RuvC to scan DNA until it finds its consensus sequence, where it cleaves and resolves the cruciform DNA. In Allorhizobium ampelinum (strain ATCC BAA-846 / DSM 112012 / S4) (Agrobacterium vitis (strain S4)), this protein is Crossover junction endodeoxyribonuclease RuvC.